The following is a 225-amino-acid chain: Cytidylate kinase (225 aa).

Residue 11–19 (GPAAAGKST) participates in ATP binding.

It belongs to the cytidylate kinase family. Type 1 subfamily.

Its subcellular location is the cytoplasm. It carries out the reaction CMP + ATP = CDP + ADP. The catalysed reaction is dCMP + ATP = dCDP + ADP. This is Cytidylate kinase from Bacillus cereus (strain G9842).